Consider the following 363-residue polypeptide: NADH-quinone oxidoreductase subunit H (363 aa).

A run of 9 helical transmembrane segments spans residues 62–82 (GPMY…KLLF), 94–114 (AIFV…WAVV), 127–147 (VGLL…ILAG), 166–186 (VVSY…AAGS), 202–222 (FFDW…VSGV), 239–257 (IVAG…LFFL), 264–286 (ILVS…QGWV), 293–313 (LIDW…LFFA), and 339–359 (FIPL…SGVI).

It belongs to the complex I subunit 1 family. NDH-1 is composed of 14 different subunits. Subunits NuoA, H, J, K, L, M, N constitute the membrane sector of the complex.

It localises to the cell inner membrane. It catalyses the reaction a quinone + NADH + 5 H(+)(in) = a quinol + NAD(+) + 4 H(+)(out). Functionally, NDH-1 shuttles electrons from NADH, via FMN and iron-sulfur (Fe-S) centers, to quinones in the respiratory chain. The immediate electron acceptor for the enzyme in this species is believed to be ubiquinone. Couples the redox reaction to proton translocation (for every two electrons transferred, four hydrogen ions are translocated across the cytoplasmic membrane), and thus conserves the redox energy in a proton gradient. This subunit may bind ubiquinone. This chain is NADH-quinone oxidoreductase subunit H, found in Xylella fastidiosa (strain 9a5c).